We begin with the raw amino-acid sequence, 754 residues long: MTRAHTLGFPRIGAKRELKFALESYWRGETTQAELIATGKSLRERHWQAQRTAGVNLLPVGDFAWYDQVLGTSLLVDAVPARHRHGDTDLDTLFRVARGRAPTGPSAAAAEMTKWFNTNYHYLVPEFSRDQRFKLGWSQLFDEVEEAKALGLPVKAVLLGPVSYLWLGKEKESGFSRLELLDRLLIVYQEILAKLAAQGVEWVQIDEPALALDLPDEWRLAYLNAYERLSGPCKLLLTTYFGSVAHQRDIITSLKVDGLHLDLVAAPEQLETLVPHLPAQWVLSAGVINGRNVWRANLAKLAPTLKALKEKLGERLWVASSCSLLHSPVDLTLEHELDPQTRSWFAFALQKCYELGLLSDYLDGGDLDKITAYSQPLVDRESDSRVHKKAVQSRLASLTNSDFDRQSAYPVRAQAQRNDLKLPLLPTTTIGSFPQTSEIRVLRQEWRAGRIDDSAYEAGIQAQIKDAIERQEAIGLDVLVHGEAERNDMVEYFGELLDGFAITRFGWVQSYGSRCVKPPVITTDIDRPTPMTLEWTKFAQSLTDKPVKGMLTGPVTILCWSFPREDVSREQSALQIGLAIRDEVADLEAAGIKIIQIDEPAIREGLPLRKQDHQAYLDWAVRAFRLSASPVVDSTQIHTHMCYSDFNLIIEAVAALDADVITIETSRSQMQLLEAFERFNYPNEIGPGVYDIHSPNVPSQGWIEDLIRKAAKQIPADRLWVNPDCGLKTRGWEETEAALKVMVNATKALRTELA.

5-methyltetrahydropteroyltri-L-glutamate-binding positions include arginine 16–lysine 19 and lysine 114. L-homocysteine-binding positions include isoleucine 430–serine 432 and glutamate 483. L-methionine is bound by residues isoleucine 430–serine 432 and glutamate 483. Residues arginine 514–cysteine 515 and tryptophan 560 each bind 5-methyltetrahydropteroyltri-L-glutamate. An L-homocysteine-binding site is contributed by aspartate 598. Aspartate 598 is an L-methionine binding site. Glutamate 604 is a binding site for 5-methyltetrahydropteroyltri-L-glutamate. Positions 640, 642, and 664 each coordinate Zn(2+). Catalysis depends on histidine 693, which acts as the Proton donor. Cysteine 725 is a binding site for Zn(2+).

This sequence belongs to the vitamin-B12 independent methionine synthase family. Zn(2+) serves as cofactor.

The enzyme catalyses 5-methyltetrahydropteroyltri-L-glutamate + L-homocysteine = tetrahydropteroyltri-L-glutamate + L-methionine. It participates in amino-acid biosynthesis; L-methionine biosynthesis via de novo pathway; L-methionine from L-homocysteine (MetE route): step 1/1. In terms of biological role, catalyzes the transfer of a methyl group from 5-methyltetrahydrofolate to homocysteine resulting in methionine formation. This Aeromonas salmonicida (strain A449) protein is 5-methyltetrahydropteroyltriglutamate--homocysteine methyltransferase.